The chain runs to 121 residues: Basic phospholipase A2 VRV-PL-VIIIa (121 aa).

7 disulfides stabilise this stretch: Cys-26-Cys-115, Cys-28-Cys-44, Cys-43-Cys-95, Cys-49-Cys-121, Cys-50-Cys-88, Cys-57-Cys-81, and Cys-75-Cys-86. Ca(2+) is bound by residues Tyr-27, Gly-29, and Gly-31. Residue His-47 is part of the active site. Ca(2+) is bound at residue Asp-48. The active site involves Asp-89.

This sequence belongs to the phospholipase A2 family. Group II subfamily. D49 sub-subfamily. As to quaternary structure, monomer. Ca(2+) is required as a cofactor. In terms of tissue distribution, expressed by the venom gland.

It localises to the secreted. The enzyme catalyses a 1,2-diacyl-sn-glycero-3-phosphocholine + H2O = a 1-acyl-sn-glycero-3-phosphocholine + a fatty acid + H(+). Its activity is regulated as follows. Oxyphenbutazone (OPB), anisic acid and atropine inhibit the enzymatic activity by binding at the substrate-binding site. P-coumaric acid, resveratrol, spermidine, corticosterone and gramine derivative inhibit the enzymatic activity by binding at the substrate-binding site. Functionally, snake venom phospholipase A2 (PLA2) that shows weak neurotoxicity and medium anticoagulant effects by binding to factor Xa (F10) and inhibiting the prothrombinase activity (IC(50) is 130 nM). It also damages vital organs such as lung, liver and kidney, displays edema-inducing activities when injected into the foot pads of mice and induces necrosis of muscle cells when injected into the thigh muscle. Has a low enzymatic activity. PLA2 catalyzes the calcium-dependent hydrolysis of the 2-acyl groups in 3-sn-phosphoglycerides. The polypeptide is Basic phospholipase A2 VRV-PL-VIIIa (Daboia russelii (Russel's viper)).